Reading from the N-terminus, the 216-residue chain is 3-isopropylmalate dehydratase small subunit (216 aa).

It belongs to the LeuD family. LeuD type 1 subfamily. Heterodimer of LeuC and LeuD.

The enzyme catalyses (2R,3S)-3-isopropylmalate = (2S)-2-isopropylmalate. It participates in amino-acid biosynthesis; L-leucine biosynthesis; L-leucine from 3-methyl-2-oxobutanoate: step 2/4. Its function is as follows. Catalyzes the isomerization between 2-isopropylmalate and 3-isopropylmalate, via the formation of 2-isopropylmaleate. This chain is 3-isopropylmalate dehydratase small subunit, found in Albidiferax ferrireducens (strain ATCC BAA-621 / DSM 15236 / T118) (Rhodoferax ferrireducens).